The chain runs to 303 residues: Suppressor of silencing P0 (303 aa).

This sequence belongs to the polerovirus P0 protein family.

In terms of biological role, suppressor of RNA-mediated gene silencing. This Pea enation mosaic virus-1 (strain WSG) (PEMV-1) protein is Suppressor of silencing P0.